Consider the following 479-residue polypeptide: FAD-dependent monooxygenase sdcF (479 aa).

One can recognise an FAD-binding PCMH-type domain in the interval 40 to 213; the sequence is AQLPPSCFVL…TLFDMEAFST (174 aa). His79 bears the Pros-8alpha-FAD histidine mark.

This sequence belongs to the oxygen-dependent FAD-linked oxidoreductase family. Requires FAD as cofactor.

It functions in the pathway secondary metabolite biosynthesis. Functionally, FAD-dependent monooxygenase; part of the gene cluster that mediates the biosynthesis of the polyenes aspernidgulenes. The carbon backbone of aspernidgulenes is synthesized by the HR-PKS sdgA, which accepts acetyl-CoA as the starter unit and performs malonyl-CoA extensions as well as regioselective methylation and reduction. The resulting nonaketide offloads the HR-PKS by intramolecular lactonization to yield the 5,6-dihydro-alpha-pyrone-containing hexaenoic acids preaspernidgulene A1 and A2. The FAD-dependent monooxygenase sdgC then installs the first epoxide on the penultimate double bond. Subsequently, the FAD-dependent monooxygenase sdgF presumably generates a ketone intermediate through Meinwald rearrangement involving a hydride shift. Next, sdgC introduces another epoxide on the last olefin of the ketone intermediate after E/Z isomerization. The epoxide hydrolase sdgD then catalyzes stereospecific cyclization of the 5,6-dihydro-alpha-pyrone and opening of the epoxide ring to form an oxygenated trimethylcyclopentanone and an oxabicyclo[2.2.1]heptane unit. Finally, the bicyclic unit undergoes hydrolytic cleavage, either spontaneously or catalyzed by sdgD, to assemble the dimethyl-gamma-lactone moiety in aspernidgulene A1. The chain is FAD-dependent monooxygenase sdcF from Emericella nidulans (strain FGSC A4 / ATCC 38163 / CBS 112.46 / NRRL 194 / M139) (Aspergillus nidulans).